Reading from the N-terminus, the 311-residue chain is Ribosomal protein L11 methyltransferase (311 aa).

The S-adenosyl-L-methionine site is built by Thr-162, Gly-183, Asp-205, and Asn-248.

Belongs to the methyltransferase superfamily. PrmA family.

The protein localises to the cytoplasm. The enzyme catalyses L-lysyl-[protein] + 3 S-adenosyl-L-methionine = N(6),N(6),N(6)-trimethyl-L-lysyl-[protein] + 3 S-adenosyl-L-homocysteine + 3 H(+). In terms of biological role, methylates ribosomal protein L11. The protein is Ribosomal protein L11 methyltransferase of Bacillus subtilis (strain 168).